A 110-amino-acid chain; its full sequence is uncharacterized protein (110 aa).

The protein to M.jannaschii MJ0123 and A.aeolicus AA15.

This is an uncharacterized protein from Methanocaldococcus jannaschii (strain ATCC 43067 / DSM 2661 / JAL-1 / JCM 10045 / NBRC 100440) (Methanococcus jannaschii).